Consider the following 343-residue polypeptide: Mesaconyl-CoA hydratase (343 aa).

The MaoC-like domain occupies 47-116; the sequence is SDEFARACGL…STVIGLKENS (70 aa). Residues 60–63, 83–86, and 94–96 contribute to the substrate site; these read PVDE, VANL, and LKP.

The catalysed reaction is (2R,3S)-beta-methylmalyl-CoA = 2-methylfumaryl-CoA + H2O. Involved in the ethylmalonyl-CoA pathway for acetate assimilation. Catalyzes the reversible hydration of mesaconyl-CoA (2-methylfumaryl-CoA) to yield beta-methylmalyl-CoA ((2R,3S)-beta-methylmalyl-CoA). This is Mesaconyl-CoA hydratase (mch) from Cereibacter sphaeroides (strain ATCC 17023 / DSM 158 / JCM 6121 / CCUG 31486 / LMG 2827 / NBRC 12203 / NCIMB 8253 / ATH 2.4.1.) (Rhodobacter sphaeroides).